The primary structure comprises 98 residues: Class II hydrophobin 3 (98 aa).

Residues 1–18 (MQFTTTTLIAILSALAVA) form the signal peptide. 2 N-linked (GlcNAc...) asparagine glycosylation sites follow: Asn26 and Asn54. Cystine bridges form between Cys35/Cys83, Cys44/Cys74, Cys45/Cys57, and Cys84/Cys95.

Belongs to the cerato-ulmin hydrophobin family.

It is found in the secreted. It localises to the cell wall. Functionally, aerial growth, conidiation, and dispersal of filamentous fungi in the environment rely upon a capability of their secreting small amphipathic proteins called hydrophobins (HPBs) with low sequence identity. Class I can self-assemble into an outermost layer of rodlet bundles on aerial cell surfaces, conferring cellular hydrophobicity that supports fungal growth, development and dispersal; whereas Class II form highly ordered films at water-air interfaces through intermolecular interactions but contribute nothing to the rodlet structure. In Botryotinia fuckeliana, hydrophobins are not involved in conferring surface hydrophobicity to conidia and aerial hyphae and their function in sclerotia and fruiting bodies remains to be investigated. This chain is Class II hydrophobin 3, found in Botryotinia fuckeliana (strain B05.10) (Noble rot fungus).